We begin with the raw amino-acid sequence, 159 residues long: Transcription elongation factor GreA (159 aa).

Positions Asn-45–Leu-67 form a coiled coil.

The protein belongs to the GreA/GreB family.

In terms of biological role, necessary for efficient RNA polymerase transcription elongation past template-encoded arresting sites. The arresting sites in DNA have the property of trapping a certain fraction of elongating RNA polymerases that pass through, resulting in locked ternary complexes. Cleavage of the nascent transcript by cleavage factors such as GreA or GreB allows the resumption of elongation from the new 3'terminus. GreA releases sequences of 2 to 3 nucleotides. The chain is Transcription elongation factor GreA from Neorickettsia sennetsu (strain ATCC VR-367 / Miyayama) (Ehrlichia sennetsu).